The sequence spans 313 residues: Intelectin-1b (313 aa).

Positions 1–19 are cleaved as a signal peptide; it reads MTQLGFLLFIMIATRVCSA. Residues 32-251 enclose the Fibrinogen C-terminal domain; that stretch reads SFFSSLPRSC…NNERAASALC (220 aa). A disulfide bridge connects residues cysteine 41 and cysteine 70. Ca(2+) is bound by residues histidine 86, glutamate 87, asparagine 89, glycine 92, glycine 97, aspartate 98, and aspartate 133. Cystine bridges form between cysteine 94/cysteine 280, cysteine 199/cysteine 259, and cysteine 251/cysteine 265. Asparagine 163 is a glycosylation site (N-linked (GlcNAc...) asparagine). Positions 260, 262, 274, and 282 each coordinate Ca(2+). Residues 262–263 and glutamate 274 contribute to the a carbohydrate site; that span reads EH. Serine 298 is lipidated: GPI-anchor amidated serine. A propeptide spanning residues 299 to 313 is cleaved from the precursor; that stretch reads NSREITEAAVLLFYR.

Expressed in the globlet and Paneth cells of the small intestine of infected mice. Expressed in the ileum of uninfected mice.

The protein localises to the cell membrane. The protein resides in the secreted. Its function is as follows. May play a protective role in the innate immune response to parasite infection. The protein is Intelectin-1b (Itln1b) of Mus musculus (Mouse).